The primary structure comprises 99 residues: Nucleoid-associated protein SSA_0326 (99 aa).

Residues M1 to Q15 are compositionally biased toward low complexity. The segment at M1–A23 is disordered.

This sequence belongs to the YbaB/EbfC family. In terms of assembly, homodimer.

It localises to the cytoplasm. The protein resides in the nucleoid. In terms of biological role, binds to DNA and alters its conformation. May be involved in regulation of gene expression, nucleoid organization and DNA protection. The polypeptide is Nucleoid-associated protein SSA_0326 (Streptococcus sanguinis (strain SK36)).